The chain runs to 194 residues: Ras-related protein Rab-22A (194 aa).

12–20 (GDTGVGKSS) is a binding site for GTP. The short motif at 34–42 (INPTIGASF) is the Effector region element. Residues 60 to 64 (DTAGQ), 118 to 121 (NKCD), and 148 to 150 (SAK) each bind GTP. The segment at 170-194 (DANPPSGGKGFKLRRQPSEPQRSCC) is disordered. Residues Cys-193 and Cys-194 are each lipidated (S-geranylgeranyl cysteine).

Belongs to the small GTPase superfamily. Rab family. As to quaternary structure, interacts directly with ZFYVE20. Interacts (in its GTP-bound form) with RINL and RABGEF1. Binds EEA1.

Its subcellular location is the endosome membrane. It is found in the cell membrane. The protein resides in the early endosome. The protein localises to the late endosome. It localises to the cell projection. Its subcellular location is the ruffle. It is found in the cytoplasmic vesicle. The protein resides in the phagosome. The protein localises to the phagosome membrane. Functionally, plays a role in endocytosis and intracellular protein transport. Mediates trafficking of TF from early endosomes to recycling endosomes. Required for NGF-mediated endocytosis of NTRK1, and subsequent neurite outgrowth. Binds GTP and GDP and has low GTPase activity. Alternates between a GTP-bound active form and a GDP-bound inactive form. In Canis lupus familiaris (Dog), this protein is Ras-related protein Rab-22A (RAB22A).